A 309-amino-acid polypeptide reads, in one-letter code: 2-oxoacid:ferredoxin oxidoreductase 2, subunit beta (309 aa).

Cysteine 17, cysteine 20, and cysteine 51 together coordinate [4Fe-4S] cluster. Residues 49–52 (IGCS) and histidine 68 contribute to the thiamine diphosphate site. Aspartate 93 contacts Mg(2+). 94–95 (GD) contacts thiamine diphosphate. Residues asparagine 121 and valine 123 each contribute to the Mg(2+) site. A thiamine diphosphate-binding site is contributed by 125 to 126 (GL). Cysteine 200 serves as a coordination point for [4Fe-4S] cluster.

Heterodimer composed of an alpha and a beta subunit. [4Fe-4S] cluster is required as a cofactor. It depends on thiamine diphosphate as a cofactor. The cofactor is Mg(2+).

It catalyses the reaction a 2-oxocarboxylate + 2 oxidized [2Fe-2S]-[ferredoxin] + CoA = an acyl-CoA + 2 reduced [2Fe-2S]-[ferredoxin] + CO2 + H(+). In terms of biological role, catalyzes the coenzyme A-dependent oxidative decarboxylation of different 2-oxoacids such as pyruvate, 2-oxobutyrate, glyoxylate and 2-oxoglutarate to form their CoA derivatives. This chain is 2-oxoacid:ferredoxin oxidoreductase 2, subunit beta, found in Aeropyrum pernix (strain ATCC 700893 / DSM 11879 / JCM 9820 / NBRC 100138 / K1).